The following is a 348-amino-acid chain: NADH-ubiquinone oxidoreductase chain 2 (348 aa).

The next 10 helical transmembrane spans lie at 1–21 (MSPYVTMILISSLGLGTTITF), 25–45 (SWLMAWMGLEINTLAITPLMV), 60–80 (FLTQATASGLLLFATLNNAWM), 93–115 (LSAPMITMALALKMGVAPMHFWL), 149–169 (LNTTTMTILGLTSTIIGGLGG), 177–197 (KVLAYSSIAHLGWMVIIIQYS), 200–220 (LALLNLLLYITMTSTAFLTLM), 239–259 (IATMTAMLALLALGGLPPLTG), 274–294 (NLPALATLMALSALLSLFFYL), and 326–346 (LAMLSIMTLMALPTTPTMVAI).

This sequence belongs to the complex I subunit 2 family.

It is found in the mitochondrion inner membrane. The enzyme catalyses a ubiquinone + NADH + 5 H(+)(in) = a ubiquinol + NAD(+) + 4 H(+)(out). Functionally, core subunit of the mitochondrial membrane respiratory chain NADH dehydrogenase (Complex I) that is believed to belong to the minimal assembly required for catalysis. Complex I functions in the transfer of electrons from NADH to the respiratory chain. The immediate electron acceptor for the enzyme is believed to be ubiquinone. The sequence is that of NADH-ubiquinone oxidoreductase chain 2 (MT-ND2) from Latimeria chalumnae (Coelacanth).